Here is a 276-residue protein sequence, read N- to C-terminus: Large ribosomal subunit protein uL2 (276 aa).

The disordered stretch occupies residues 212 to 276 (NRHRGIRPQT…KLIISRKKHK (65 aa)). Residues 257 to 276 (YKTRKKKASDKLIISRKKHK) are compositionally biased toward basic residues.

This sequence belongs to the universal ribosomal protein uL2 family. Part of the 50S ribosomal subunit. Forms a bridge to the 30S subunit in the 70S ribosome.

Functionally, one of the primary rRNA binding proteins. Required for association of the 30S and 50S subunits to form the 70S ribosome, for tRNA binding and peptide bond formation. It has been suggested to have peptidyltransferase activity; this is somewhat controversial. Makes several contacts with the 16S rRNA in the 70S ribosome. The sequence is that of Large ribosomal subunit protein uL2 from Helicobacter pylori (strain HPAG1).